We begin with the raw amino-acid sequence, 325 residues long: 33 kDa chaperonin (325 aa).

2 disulfides stabilise this stretch: C260/C262 and C293/C296.

It belongs to the HSP33 family. In terms of processing, under oxidizing conditions two disulfide bonds are formed involving the reactive cysteines. Under reducing conditions zinc is bound to the reactive cysteines and the protein is inactive.

The protein localises to the cytoplasm. Its function is as follows. Redox regulated molecular chaperone. Protects both thermally unfolding and oxidatively damaged proteins from irreversible aggregation. Plays an important role in the bacterial defense system toward oxidative stress. The protein is 33 kDa chaperonin of Aquifex aeolicus (strain VF5).